The sequence spans 495 residues: NADH-ubiquinone oxidoreductase chain 4 (495 aa).

The next 14 helical transmembrane spans lie at 9–29 (YSNL…ILVI), 37–57 (IRGI…FFWI), 89–109 (ISLF…LVGF), 118–138 (EYMI…CSLD), 139–159 (LLIF…IIGV), 173–193 (FFLY…FIFF), 214–234 (ILLW…VPVH), 245–265 (PTAG…YGFL), 272–292 (FPEA…IAII), 307–327 (IIAY…FSLN), 335–355 (ILLM…VGAL), 367–387 (YGGL…FTLA), 413–433 (LVAT…LWLY), and 457–477 (VLIF…PEVF).

It belongs to the complex I subunit 4 family.

The protein resides in the mitochondrion membrane. The enzyme catalyses a ubiquinone + NADH + 5 H(+)(in) = a ubiquinol + NAD(+) + 4 H(+)(out). Core subunit of the mitochondrial membrane respiratory chain NADH dehydrogenase (Complex I) that is believed to belong to the minimal assembly required for catalysis. Complex I functions in the transfer of electrons from NADH to the respiratory chain. The immediate electron acceptor for the enzyme is believed to be ubiquinone. This is NADH-ubiquinone oxidoreductase chain 4 (ND4) from Marchantia polymorpha (Common liverwort).